The chain runs to 321 residues: Ribose-phosphate pyrophosphokinase (321 aa).

Residues 44–46 (DGE) and 103–104 (RQ) contribute to the ATP site. Positions 137 and 179 each coordinate Mg(2+). Lys202 is an active-site residue. D-ribose 5-phosphate contacts are provided by residues Arg204, Asp228, and 232-236 (DTAGT).

The protein belongs to the ribose-phosphate pyrophosphokinase family. Class I subfamily. In terms of assembly, homohexamer. It depends on Mg(2+) as a cofactor.

It is found in the cytoplasm. The enzyme catalyses D-ribose 5-phosphate + ATP = 5-phospho-alpha-D-ribose 1-diphosphate + AMP + H(+). It functions in the pathway metabolic intermediate biosynthesis; 5-phospho-alpha-D-ribose 1-diphosphate biosynthesis; 5-phospho-alpha-D-ribose 1-diphosphate from D-ribose 5-phosphate (route I): step 1/1. In terms of biological role, involved in the biosynthesis of the central metabolite phospho-alpha-D-ribosyl-1-pyrophosphate (PRPP) via the transfer of pyrophosphoryl group from ATP to 1-hydroxyl of ribose-5-phosphate (Rib-5-P). This chain is Ribose-phosphate pyrophosphokinase, found in Staphylococcus aureus (strain COL).